The chain runs to 453 residues: MDAQRGHTTTILMFPWLGYGHLSAFLELAKSLSRRNFHIYFCSTSVNLDAIKPKLPSSSSSDSIQLVELCLPSSPDQLPPHLHTTNALPPHLMPTLHQAFSMAAQHFAAILHTLAPHLLIYDSFQPWAPQLASSLNIPAINFNTTGASVLTRMLHATHYPSSKFPISEFVLHDYWKAMYSAAGGAVTKKDHKIGETLANCLHASCSVILINSFRELEEKYMDYLSVLLNKKVVPVGPLVYEPNQDGEDEGYSSIKNWLDKKEPSSTVFVSFGSEYFPSKEEMEEIAHGLEASEVHFIWVVRFPQGDNTSAIEDALPKGFLERVGERGMVVKGWAPQAKILKHWSTGGFVSHCGWNSVMESMMFGVPIIGVPMHLDQPFNAGLAEEAGVGVEAKRDPDGKIQRDEVAKLIKEVVVEKTREDVRKKAREMSEILRSKGEEKMDEMVAAISLFLKI.

The active-site Proton acceptor is the H21. D122 serves as the catalytic Charge relay. UDP-alpha-D-glucose-binding residues include S273, Q336, W354, N355, S356, E359, D375, and Q376.

This sequence belongs to the UDP-glycosyltransferase family. Highly expressed in mature fruits.

It carries out the reaction mogroside IIE + UDP-alpha-D-glucose = mogroside IIIX + UDP + H(+). The catalysed reaction is mogroside III + UDP-alpha-D-glucose = mogroside IV + UDP + H(+). The enzyme catalyses mogroside III + UDP-alpha-D-glucose = siamenoside I + UDP + H(+). It catalyses the reaction mogroside IV + UDP-alpha-D-glucose = mogroside V + UDP + H(+). It participates in secondary metabolite biosynthesis; terpenoid biosynthesis. Its function is as follows. UDP-glycosyltransferase involved in the biosynthesis of cucurbitacin and mogroside tetracyclic triterpene natural products (e.g. siamenoside I and mogrosides IV, V and VI). Cucurbitacins have cytotoxic properties and exhibit deterrent taste as a defense barrier against herbivores. Mogrosides are nonsugar highly oxygenated compounds used as high-intensity zero-calorie sweeteners; they also possess pharmacological properties such as regulating immunity, lowering blood sugar and lipid levels, protecting the liver, and acting as antioxidants and antitumor agents. Catalyzes the branched glucosylations of mogroside II-E, mogroside III and mogroside IV. The sequence is that of Mogroside IIIx synthase from Siraitia grosvenorii (Monk's fruit).